Here is a 235-residue protein sequence, read N- to C-terminus: Uridylate kinase (235 aa).

9 to 12 (KLSG) contacts ATP. G51 provides a ligand contact to UMP. ATP is bound by residues G52 and R56. UMP-binding positions include D71 and 132–139 (TGNPYFTT). Residues T159, Y165, and D168 each contribute to the ATP site.

This sequence belongs to the UMP kinase family. Homohexamer.

Its subcellular location is the cytoplasm. The enzyme catalyses UMP + ATP = UDP + ADP. The protein operates within pyrimidine metabolism; CTP biosynthesis via de novo pathway; UDP from UMP (UMPK route): step 1/1. Its activity is regulated as follows. Inhibited by UTP. Its function is as follows. Catalyzes the reversible phosphorylation of UMP to UDP. The sequence is that of Uridylate kinase from Flavobacterium psychrophilum (strain ATCC 49511 / DSM 21280 / CIP 103535 / JIP02/86).